The chain runs to 56 residues: Large ribosomal subunit protein bL33 (56 aa).

The protein belongs to the bacterial ribosomal protein bL33 family.

The protein is Large ribosomal subunit protein bL33 of Vibrio vulnificus (strain YJ016).